The primary structure comprises 124 residues: Meiotically up-regulated gene 103 protein (124 aa).

It localises to the nucleus. It is found in the nucleolus. Functionally, has a role in meiosis. The protein is Meiotically up-regulated gene 103 protein (mug103) of Schizosaccharomyces pombe (strain 972 / ATCC 24843) (Fission yeast).